The primary structure comprises 362 residues: E3 ubiquitin-protein ligase TM129 (362 aa).

Residues 1 to 6 are Lumenal-facing; the sequence is MDSPEV. The chain crosses the membrane as a helical span at residues 7–27; it reads TFTLAYLVFAVCFVFTPNEFH. Over 28–56 the chain is Cytoplasmic; it reads AAGLTVQNLLSGWLGSEDAAFVPFHLRRT. Residues 57 to 77 traverse the membrane as a helical segment; that stretch reads AATLLCHSLLPLGYYVGMCLA. Over 78-94 the chain is Lumenal; it reads ASEKRLHALSQAPEAWR. Residues 95–115 traverse the membrane as a helical segment; that stretch reads LFLLLAVTLPSIACILIYYWS. Over 116 to 362 the chain is Cytoplasmic; that stretch reads RDRWACHPLA…FCILDVCTVR (247 aa). An RING-type; degenerate zinc finger spans residues 285–350; it reads CIGCMQTRAS…ASRVPCPTCR (66 aa).

Belongs to the TMEM129 family. As to quaternary structure, integral component of ER-resident dislocation complexes.

It is found in the endoplasmic reticulum membrane. It carries out the reaction S-ubiquitinyl-[E2 ubiquitin-conjugating enzyme]-L-cysteine + [acceptor protein]-L-lysine = [E2 ubiquitin-conjugating enzyme]-L-cysteine + N(6)-ubiquitinyl-[acceptor protein]-L-lysine.. Its pathway is protein modification; protein ubiquitination. In terms of biological role, E3 ubiquitin-protein ligase involved in ER-associated protein degradation, preferentially associates with the E2 enzyme UBE2J2. Exploited by viral US11 proteins to mediate HLA class I proteins degradation. The polypeptide is E3 ubiquitin-protein ligase TM129 (TMEM129) (Homo sapiens (Human)).